We begin with the raw amino-acid sequence, 556 residues long: Phenylalanine--tRNA ligase beta subunit (556 aa).

Residues 278-353 enclose the B5 domain; that stretch reads LTPKRFEVEL…IAYGYNNIEP (76 aa). Positions 331, 337, 340, and 341 each coordinate Mg(2+).

Belongs to the phenylalanyl-tRNA synthetase beta subunit family. Type 2 subfamily. Tetramer of two alpha and two beta subunits. Mg(2+) serves as cofactor.

It localises to the cytoplasm. It carries out the reaction tRNA(Phe) + L-phenylalanine + ATP = L-phenylalanyl-tRNA(Phe) + AMP + diphosphate + H(+). In Pyrococcus abyssi (strain GE5 / Orsay), this protein is Phenylalanine--tRNA ligase beta subunit.